Consider the following 249-residue polypeptide: Probable transcriptional regulatory protein Sfum_0996 (249 aa).

It belongs to the TACO1 family.

The protein resides in the cytoplasm. In Syntrophobacter fumaroxidans (strain DSM 10017 / MPOB), this protein is Probable transcriptional regulatory protein Sfum_0996.